Reading from the N-terminus, the 309-residue chain is Tagatose-6-phosphate kinase (309 aa).

This sequence belongs to the carbohydrate kinase PfkB family. LacC subfamily.

It carries out the reaction D-tagatofuranose 6-phosphate + ATP = D-tagatofuranose 1,6-bisphosphate + ADP + H(+). Its pathway is carbohydrate metabolism; D-tagatose 6-phosphate degradation; D-glyceraldehyde 3-phosphate and glycerone phosphate from D-tagatose 6-phosphate: step 1/2. This chain is Tagatose-6-phosphate kinase, found in Streptococcus pneumoniae (strain P1031).